The sequence spans 490 residues: Transcription factor MYB101 (490 aa).

The disordered stretch occupies residues 1–21 (MDGGGETTATATMEGRGLKKG). HTH myb-type domains follow at residues 15–67 (GRGL…ANHL) and 68–122 (RPNL…KRRQ). 2 consecutive DNA-binding regions (H-T-H motif) follow at residues 43 to 67 (WNAVQKNSGLLRCGKSCRLRWANHL) and 95 to 118 (WARMASQLPGRTDNEIKNYWNTRM). The tract at residues 168–206 (YTNSSNTSSSSSSFSSSSSQPSKRLRPDPLVSTNPGLNP) is disordered. The span at 169-186 (TNSSNTSSSSSSFSSSSS) shows a compositional bias: low complexity.

Present mostly in flowers, siliques and floral shoot tips. Expression is restricted to the subapical pith cells of both vegetative and flowering plants and to the hypocotyl hook. Expressed in pollen grains and pollen tube. Mostly expressed in mature pollen grains, and, to a lower extent, in inflorescences and siliques.

It is found in the nucleus. In terms of biological role, transcription activator. Binds to 5'-CAACTGTC-3' and/or 5'-TAACAAA-3' motif in target gene promoter (e.g. alpha-amylase) to promote their expression. Positive regulator of abscisic acid (ABA) responses leading to growth arrest during seed germination. Promotes the expression of aleurone-related genes (e.g. CP1, CP, GASA1, BXL1 and BXL2) in seeds. Together with MYB33 and MYB65, promotes the programmed cell death (PCD) leading to vacuolation of protein storage vacuoles (PSVs) in the aleurone layers during seed germination. Maybe involved in the regulation of leaves lamina morphogenesis. Involved in pollen grain development. Together with MYB97 and MYB120, functions as a male factor that controls pollen tube-synergid interaction in fertilization. Required for pollen tube growth arrest and sperm cell release in the female gametophyte, probably via the regulation of pollen tube-specific gene expression. In Arabidopsis thaliana (Mouse-ear cress), this protein is Transcription factor MYB101.